A 177-amino-acid polypeptide reads, in one-letter code: ATP synthase subunit delta (177 aa).

The protein belongs to the ATPase delta chain family. In terms of assembly, F-type ATPases have 2 components, F(1) - the catalytic core - and F(0) - the membrane proton channel. F(1) has five subunits: alpha(3), beta(3), gamma(1), delta(1), epsilon(1). F(0) has three main subunits: a(1), b(2) and c(10-14). The alpha and beta chains form an alternating ring which encloses part of the gamma chain. F(1) is attached to F(0) by a central stalk formed by the gamma and epsilon chains, while a peripheral stalk is formed by the delta and b chains.

It localises to the cell inner membrane. In terms of biological role, f(1)F(0) ATP synthase produces ATP from ADP in the presence of a proton or sodium gradient. F-type ATPases consist of two structural domains, F(1) containing the extramembraneous catalytic core and F(0) containing the membrane proton channel, linked together by a central stalk and a peripheral stalk. During catalysis, ATP synthesis in the catalytic domain of F(1) is coupled via a rotary mechanism of the central stalk subunits to proton translocation. This protein is part of the stalk that links CF(0) to CF(1). It either transmits conformational changes from CF(0) to CF(1) or is implicated in proton conduction. The sequence is that of ATP synthase subunit delta from Shewanella sediminis (strain HAW-EB3).